The primary structure comprises 477 residues: PTS system glucose-specific EIICB component (477 aa).

The Cytoplasmic portion of the chain corresponds to 1 to 14 (MFKNAFANLQKVGK). The 388-residue stretch at 1 to 388 (MFKNAFANLQ…LDLKTPGRED (388 aa)) folds into the PTS EIIC type-1 domain. The chain crosses the membrane as a helical span at residues 15–35 (SLMLPVSVLPIAGILLGVGSA). Over 36–50 (NFSWLPAVVSHVMAE) the chain is Periplasmic. A helical transmembrane segment spans residues 51-71 (AGGSVFANMPLIFAIGVALGF). The Cytoplasmic segment spans residues 72 to 79 (TNNDGVSA). The chain crosses the membrane as a helical span at residues 80 to 100 (LAAVVAYGIMVKTMAVVAPLV). At 101–111 (LHLPAEEIASK) the chain is on the periplasmic side. The helical transmembrane segment at 112 to 132 (HLADTGVLGGIISGAIAAYMF) threads the bilayer. The Cytoplasmic segment spans residues 133 to 151 (NRFYRIKLPEYLGFFAGKR). Residues 152–172 (FVPIISGLAAIFTGVVLSFIW) form a helical membrane-spanning segment. Residues 173–190 (PPIGSAIQTFSQWAAYQN) lie on the Periplasmic side of the membrane. The chain crosses the membrane as a helical span at residues 191 to 211 (PVVAFGIYGFIERCLVPFGLH). Residues 212-249 (HIWNVPFQMQIGEYTNAAGQVFHGDIPRYMAGDPTAGK) lie on the Cytoplasmic side of the membrane. Residues 250–270 (LSGGFLFKMYGLPAAAIAIWH) traverse the membrane as a helical segment. The Periplasmic segment spans residues 271 to 279 (SAKPENRAK). The chain crosses the membrane as a helical span at residues 280-300 (VGGIMISAALTSFLTGITEPI). The Cytoplasmic portion of the chain corresponds to 301–309 (EFSFMFVAP). A helical membrane pass occupies residues 310–330 (ILYIIHAILAGLAFPICILLG). At 331–355 (MRDGTSFSHGLIDFIVLSGNSSKLW) the chain is on the periplasmic side. The chain crosses the membrane as a helical span at residues 356-376 (LFPIVGIGYAIVYYTIFRVLI). Residues 377–477 (KALDLKTPGR…TEMDEYIRNH (101 aa)) are Cytoplasmic-facing. The region spanning 399–477 (SEMAPALVAA…TEMDEYIRNH (79 aa)) is the PTS EIIB type-1 domain. Cysteine 421 acts as the Phosphocysteinsyse intermediate; for EIIB activity in catalysis. Cysteine 421 is subject to Phosphocysteine.

It localises to the cell inner membrane. The catalysed reaction is N(pros)-phospho-L-histidyl-[protein] + D-glucose(out) = D-glucose 6-phosphate(in) + L-histidyl-[protein]. The phosphoenolpyruvate-dependent sugar phosphotransferase system (sugar PTS), a major carbohydrate active transport system, catalyzes the phosphorylation of incoming sugar substrates concomitantly with their translocation across the cell membrane. The enzyme II complex composed of PtsG and Crr is involved in glucose transport. Also functions as a chemoreceptor monitoring the environment for changes in sugar concentration. The protein is PTS system glucose-specific EIICB component (ptsG) of Escherichia coli O6:H1 (strain CFT073 / ATCC 700928 / UPEC).